Consider the following 197-residue polypeptide: Holliday junction branch migration complex subunit RuvA (197 aa).

Residues 1–61 (MYEYFEGTIT…ENGMTLYGFK (61 aa)) form a domain I region. The interval 62–140 (SQQDKVLFNK…NYVAENLFTE (79 aa)) is domain II. The tract at residues 141 to 150 (DEPVESVFPA) is flexible linker. The domain III stretch occupies residues 150–197 (ALEDALLALGALGYSQKEVDRIKPKLKKLPEMSADEYIKQGLGFLLKK).

The protein belongs to the RuvA family. In terms of assembly, homotetramer. Forms an RuvA(8)-RuvB(12)-Holliday junction (HJ) complex. HJ DNA is sandwiched between 2 RuvA tetramers; dsDNA enters through RuvA and exits via RuvB. An RuvB hexamer assembles on each DNA strand where it exits the tetramer. Each RuvB hexamer is contacted by two RuvA subunits (via domain III) on 2 adjacent RuvB subunits; this complex drives branch migration. In the full resolvosome a probable DNA-RuvA(4)-RuvB(12)-RuvC(2) complex forms which resolves the HJ.

It is found in the cytoplasm. In terms of biological role, the RuvA-RuvB-RuvC complex processes Holliday junction (HJ) DNA during genetic recombination and DNA repair, while the RuvA-RuvB complex plays an important role in the rescue of blocked DNA replication forks via replication fork reversal (RFR). RuvA specifically binds to HJ cruciform DNA, conferring on it an open structure. The RuvB hexamer acts as an ATP-dependent pump, pulling dsDNA into and through the RuvAB complex. HJ branch migration allows RuvC to scan DNA until it finds its consensus sequence, where it cleaves and resolves the cruciform DNA. This is Holliday junction branch migration complex subunit RuvA from Lactobacillus delbrueckii subsp. bulgaricus (strain ATCC BAA-365 / Lb-18).